A 126-amino-acid chain; its full sequence is Mating-type protein A1 (126 aa).

Positions 70–126 (SPKGKSSISPQARAFLEQVFRRKQSLNSKEKEEVAKKCGITPLQVRVWFINKRMRSK) form a DNA-binding region, homeobox.

This sequence belongs to the MATA1 family. As to quaternary structure, binds DNA with a high specificity as a heterodimer of A1 and ALPHA2.

It localises to the nucleus. Mating type proteins are sequence specific DNA-binding proteins that act as master switches in yeast differentiation by controlling gene expression in a cell type-specific fashion. Transcriptional corepressor that, in a/alpha diploid cells, binds cooperatively with the ALPHA2 protein to a 21-bp DNA sequence termed the haploid-specific gene (hsg) operator, to repress transcription of haploid-specific genes and of MATALPHA1. The sequence is that of Mating-type protein A1 (MATA1) from Saccharomyces cerevisiae (Baker's yeast).